Here is a 552-residue protein sequence, read N- to C-terminus: Urocanate hydratase (552 aa).

Residues 49-50 (GG), Gln-127, 173-175 (GMG), Glu-193, Arg-198, 239-240 (NA), 260-264 (QTSAH), 270-271 (YV), and Tyr-319 contribute to the NAD(+) site. Cys-407 is an active-site residue. An NAD(+)-binding site is contributed by Gly-489.

It belongs to the urocanase family. Composed of at least two subunits. The cofactor is NAD(+).

The protein localises to the cytoplasm. The catalysed reaction is 4-imidazolone-5-propanoate = trans-urocanate + H2O. Its pathway is amino-acid degradation; L-histidine degradation into L-glutamate; N-formimidoyl-L-glutamate from L-histidine: step 2/3. In terms of biological role, catalyzes the conversion of urocanate to 4-imidazolone-5-propionate. This is Urocanate hydratase from Bacillus subtilis (strain 168).